The chain runs to 512 residues: MVPTGQVAEKQAYEEPRQDHELKSWRCLVFYLCFFGFMAQLRPGESFITPFLLERKFTKEQVTNEIIPMLPYSHLAVLVPVFLLTDYLRYKPVLVLQCLSFVCVWLLLLLGTSVVHMQLMEVFYSVTMAARIAYSSYIFSLVHPSRYQRMASYSRAAVLLGVFISSVLGQALVTVGHISTYTLNCVSLGFILFSLVLSLFLKRPKRSLFFNRSTLARGALPCELDQMHPGPDRPETRKLDRMLGTCRDSFLVRMLSELVENARQPQLRLWCLWWVFNSSGYYLITYYVHVLWRSTDSSLSYNGAVDAASTLLSAITSFSAGFLSIRWTLWSKLVIAGVIAIQASLVFCMFQIRDIWVCYVTFVLFRGAYQFLVPIATFQIASSLSKELCALVFGINTFLATALKTCITLVVSDKRGLGLQVRDQFRIYFIYFLMLSITCFAWAGLDGLRYCQRGRHQPLAQAQELRSPLETSVQAISLQDGDLRGPQPSAPQLLSEDGMEDDRGDLRVEAKA.

An N-acetylmethionine modification is found at methionine 1. The Cytoplasmic portion of the chain corresponds to 1–29 (MVPTGQVAEKQAYEEPRQDHELKSWRCLV). Residues 30–50 (FYLCFFGFMAQLRPGESFITP) traverse the membrane as a helical segment. Residues isoleucine 48 and threonine 49 each coordinate folate. At 51–62 (FLLERKFTKEQV) the chain is on the extracellular side. A helical transmembrane segment spans residues 63-85 (TNEIIPMLPYSHLAVLVPVFLLT). The Cytoplasmic segment spans residues 86–89 (DYLR). A helical membrane pass occupies residues 90 to 110 (YKPVLVLQCLSFVCVWLLLLL). Over 111–114 (GTSV) the chain is Extracellular. The helical transmembrane segment at 115–137 (VHMQLMEVFYSVTMAARIAYSSY) threads the bilayer. Positions 121 and 131 each coordinate folate. Topologically, residues 138-151 (IFSLVHPSRYQRMA) are cytoplasmic. The chain crosses the membrane as a helical span at residues 152–176 (SYSRAAVLLGVFISSVLGQALVTVG). Folate is bound at residue valine 162. The Extracellular portion of the chain corresponds to 177 to 181 (HISTY). The helical transmembrane segment at 182–200 (TLNCVSLGFILFSLVLSLF) threads the bilayer. Residues 201-266 (LKRPKRSLFF…ELVENARQPQ (66 aa)) lie on the Cytoplasmic side of the membrane. The chain crosses the membrane as a helical span at residues 267 to 292 (LRLWCLWWVFNSSGYYLITYYVHVLW). 3 residues coordinate folate: tyrosine 281, tyrosine 282, and tyrosine 286. The Extracellular segment spans residues 293 to 300 (RSTDSSLS). A helical transmembrane segment spans residues 301–323 (YNGAVDAASTLLSAITSFSAGFL). The Cytoplasmic portion of the chain corresponds to 324-329 (SIRWTL). The chain crosses the membrane as a helical span at residues 330–350 (WSKLVIAGVIAIQASLVFCMF). Topologically, residues 351–353 (QIR) are extracellular. Residues 354–377 (DIWVCYVTFVLFRGAYQFLVPIAT) form a helical membrane-spanning segment. Residues arginine 366 and glutamine 370 each coordinate folate. Over 378 to 391 (FQIASSLSKELCAL) the chain is Cytoplasmic. The helical transmembrane segment at 392–415 (VFGINTFLATALKTCITLVVSDKR) threads the bilayer. The tract at residues 400 to 412 (ATALKTCITLVVS) is required for substrate-binding. The Extracellular portion of the chain corresponds to 416 to 423 (GLGLQVRD). The helical transmembrane segment at 424–448 (QFRIYFIYFLMLSITCFAWAGLDGL) threads the bilayer. The Cytoplasmic segment spans residues 449-512 (RYCQRGRHQP…RGDLRVEAKA (64 aa)). A phosphoserine mark is found at serine 467, serine 472, and serine 477. A disordered region spans residues 478–512 (LQDGDLRGPQPSAPQLLSEDGMEDDRGDLRVEAKA).

The protein belongs to the reduced folate carrier (RFC) transporter (TC 2.A.48) family.

It is found in the cell membrane. It localises to the apical cell membrane. The protein resides in the basolateral cell membrane. It carries out the reaction 5-amino-1-(5-phospho-beta-D-ribosyl)imidazole-4-carboxamide(in) + (6S)-5-methyl-5,6,7,8-tetrahydrofolate(out) = 5-amino-1-(5-phospho-beta-D-ribosyl)imidazole-4-carboxamide(out) + (6S)-5-methyl-5,6,7,8-tetrahydrofolate(in). Its function is as follows. Antiporter that mediates the import of reduced folates, driven by the export of organic anions. Also acts as an importer of immunoreactive cyclic dinucleotides, but with a lower transporter activity. Mechanistically, acts as a secondary active transporter, which exports intracellular organic anions down their concentration gradients to facilitate the uptake of its substrates. Has high affinity for N5-methyltetrahydrofolate, the predominant circulating form of folate. Also mediates the import of antifolate drug methotrexate. 5-amino-4-imidazolecarboxamide riboside (AICAR), when phosphorylated to AICAR monophosphate, can serve as an organic anion for antiporter activity. This chain is Reduced folate transporter, found in Mus musculus (Mouse).